The primary structure comprises 248 residues: Uridylate kinase (248 aa).

13–16 (KLSG) lines the ATP pocket. Residue G55 coordinates UMP. ATP is bound by residues G56 and R60. UMP-binding positions include D75 and 136-143 (TGNPYFTT). ATP contacts are provided by T163, Y169, and D172.

Belongs to the UMP kinase family. In terms of assembly, homohexamer.

It localises to the cytoplasm. It carries out the reaction UMP + ATP = UDP + ADP. It participates in pyrimidine metabolism; CTP biosynthesis via de novo pathway; UDP from UMP (UMPK route): step 1/1. Its activity is regulated as follows. Inhibited by UTP. Its function is as follows. Catalyzes the reversible phosphorylation of UMP to UDP. In Leptospira interrogans serogroup Icterohaemorrhagiae serovar copenhageni (strain Fiocruz L1-130), this protein is Uridylate kinase.